A 308-amino-acid chain; its full sequence is Probable plastid-lipid-associated protein 9, chloroplastic (308 aa).

A chloroplast-targeting transit peptide spans 1 to 55; sequence MALIQHGSVSGTSAVRLSFSSSVSPPSSSPPLSRVSLNFQSEKKSCYRRMICRAM.

It belongs to the PAP/fibrillin family.

Its subcellular location is the plastid. It localises to the chloroplast. The protein resides in the plastoglobule. The polypeptide is Probable plastid-lipid-associated protein 9, chloroplastic (PAP9) (Arabidopsis thaliana (Mouse-ear cress)).